Here is a 103-residue protein sequence, read N- to C-terminus: UPF0145 protein BCE_5284 (103 aa).

It belongs to the UPF0145 family.

This chain is UPF0145 protein BCE_5284, found in Bacillus cereus (strain ATCC 10987 / NRS 248).